Reading from the N-terminus, the 295-residue chain is Pyridoxal 5'-phosphate synthase subunit PdxS (295 aa).

A D-ribose 5-phosphate-binding site is contributed by D25. Residue K82 is the Schiff-base intermediate with D-ribose 5-phosphate of the active site. Residue G154 coordinates D-ribose 5-phosphate. D-glyceraldehyde 3-phosphate is bound at residue R166. Residues G215 and G236–S237 contribute to the D-ribose 5-phosphate site.

Belongs to the PdxS/SNZ family. In terms of assembly, in the presence of PdxT, forms a dodecamer of heterodimers.

It carries out the reaction aldehydo-D-ribose 5-phosphate + D-glyceraldehyde 3-phosphate + L-glutamine = pyridoxal 5'-phosphate + L-glutamate + phosphate + 3 H2O + H(+). It participates in cofactor biosynthesis; pyridoxal 5'-phosphate biosynthesis. Its function is as follows. Catalyzes the formation of pyridoxal 5'-phosphate from ribose 5-phosphate (RBP), glyceraldehyde 3-phosphate (G3P) and ammonia. The ammonia is provided by the PdxT subunit. Can also use ribulose 5-phosphate and dihydroxyacetone phosphate as substrates, resulting from enzyme-catalyzed isomerization of RBP and G3P, respectively. The protein is Pyridoxal 5'-phosphate synthase subunit PdxS of Actinobacillus pleuropneumoniae serotype 7 (strain AP76).